The chain runs to 447 residues: UDP-N-acetyl-alpha-D-muramoyl-L-alanyl-L-glutamate epimerase (447 aa).

It belongs to the MurL family.

It catalyses the reaction UDP-N-acetyl-alpha-D-muramoyl-L-alanyl-L-glutamate + ATP + H2O = UDP-N-acetyl-alpha-D-muramoyl-L-alanyl-D-glutamate + AMP + diphosphate + H(+). Its pathway is cell wall biogenesis; peptidoglycan biosynthesis. Its function is as follows. Cell wall formation. Catalyzes epimerization of the terminal L-glutamate in UDP-N-acetyl-alpha-D-muramoyl-L-alanyl-L-glutamate. This chain is UDP-N-acetyl-alpha-D-muramoyl-L-alanyl-L-glutamate epimerase, found in Micromonospora sp. (strain ATCC 39149 / NRRL 15099 / SCC 1413).